A 1388-amino-acid polypeptide reads, in one-letter code: DNA-directed RNA polymerase subunit beta (1388 aa).

The protein belongs to the RNA polymerase beta chain family. In terms of assembly, the RNAP catalytic core consists of 2 alpha, 1 beta, 1 beta' and 1 omega subunit. When a sigma factor is associated with the core the holoenzyme is formed, which can initiate transcription.

The catalysed reaction is RNA(n) + a ribonucleoside 5'-triphosphate = RNA(n+1) + diphosphate. Its function is as follows. DNA-dependent RNA polymerase catalyzes the transcription of DNA into RNA using the four ribonucleoside triphosphates as substrates. This chain is DNA-directed RNA polymerase subunit beta, found in Stenotrophomonas maltophilia (strain K279a).